The primary structure comprises 243 residues: Protein Thf1 (243 aa).

The stretch at 180-224 (SKARVEKDLNLYKSNLEKMAQAVELTEQILESERRKREQNESAKL) forms a coiled coil. The segment covering 210–220 (ESERRKREQNE) has biased composition (basic and acidic residues). A disordered region spans residues 210–243 (ESERRKREQNESAKLNTGSSEQMSQGVEACSNIS). Residues 221–243 (SAKLNTGSSEQMSQGVEACSNIS) show a composition bias toward polar residues.

The protein belongs to the THF1 family.

In terms of biological role, may be involved in photosynthetic membrane biogenesis. This is Protein Thf1 from Prochlorococcus marinus (strain MIT 9313).